The sequence spans 104 residues: L-rhamnose mutarotase (104 aa).

Substrate is bound at residue Y18. The Proton donor role is filled by H22. Substrate is bound by residues Y41 and 76–77; that span reads WW.

The protein belongs to the rhamnose mutarotase family. Homodimer.

The protein localises to the cytoplasm. It carries out the reaction alpha-L-rhamnose = beta-L-rhamnose. The protein operates within carbohydrate metabolism; L-rhamnose metabolism. Its function is as follows. Involved in the anomeric conversion of L-rhamnose. The polypeptide is L-rhamnose mutarotase (Escherichia coli O127:H6 (strain E2348/69 / EPEC)).